Consider the following 738-residue polypeptide: Phosphoribosylformylglycinamidine synthase subunit PurL (738 aa).

His-53 is a catalytic residue. The ATP site is built by Tyr-56 and Lys-95. Position 97 (Glu-97) interacts with Mg(2+). Substrate-binding positions include 98–101 and Arg-120; that span reads SHNH. His-99 functions as the Proton acceptor in the catalytic mechanism. Asp-121 serves as a coordination point for Mg(2+). Residue Gln-244 coordinates substrate. Position 274 (Asp-274) interacts with Mg(2+). 318-320 is a substrate binding site; sequence ESQ. 2 residues coordinate ATP: Asp-499 and Gly-536. Residue Asn-537 coordinates Mg(2+). Ser-539 is a binding site for substrate.

Belongs to the FGAMS family. In terms of assembly, monomer. Part of the FGAM synthase complex composed of 1 PurL, 1 PurQ and 2 PurS subunits.

The protein resides in the cytoplasm. The catalysed reaction is N(2)-formyl-N(1)-(5-phospho-beta-D-ribosyl)glycinamide + L-glutamine + ATP + H2O = 2-formamido-N(1)-(5-O-phospho-beta-D-ribosyl)acetamidine + L-glutamate + ADP + phosphate + H(+). Its pathway is purine metabolism; IMP biosynthesis via de novo pathway; 5-amino-1-(5-phospho-D-ribosyl)imidazole from N(2)-formyl-N(1)-(5-phospho-D-ribosyl)glycinamide: step 1/2. In terms of biological role, part of the phosphoribosylformylglycinamidine synthase complex involved in the purines biosynthetic pathway. Catalyzes the ATP-dependent conversion of formylglycinamide ribonucleotide (FGAR) and glutamine to yield formylglycinamidine ribonucleotide (FGAM) and glutamate. The FGAM synthase complex is composed of three subunits. PurQ produces an ammonia molecule by converting glutamine to glutamate. PurL transfers the ammonia molecule to FGAR to form FGAM in an ATP-dependent manner. PurS interacts with PurQ and PurL and is thought to assist in the transfer of the ammonia molecule from PurQ to PurL. The polypeptide is Phosphoribosylformylglycinamidine synthase subunit PurL (Leuconostoc mesenteroides subsp. mesenteroides (strain ATCC 8293 / DSM 20343 / BCRC 11652 / CCM 1803 / JCM 6124 / NCDO 523 / NBRC 100496 / NCIMB 8023 / NCTC 12954 / NRRL B-1118 / 37Y)).